The following is a 145-amino-acid chain: Ornithine decarboxylase antizyme (145 aa).

The protein belongs to the ODC antizyme family. In terms of assembly, interacts with ODC1 and thereby sterically blocks ODC homodimerization.

Its function is as follows. Ornithine decarboxylase (ODC) antizyme protein that negatively regulates ODC activity and intracellular polyamine biosynthesis and uptake in response to increased intracellular polyamine levels. Binds to ODC monomers, inhibiting the assembly of the functional ODC homodimer, and targets the monomers for ubiquitin-independent proteolytic destruction by the 26S proteasome. In Onchocerca volvulus, this protein is Ornithine decarboxylase antizyme.